The sequence spans 200 residues: Dual specificity tyrosine-phosphorylation-regulated kinase 1A (200 aa).

Tyr-41 is subject to Phosphotyrosine; by autocatalysis. Lys-58 contributes to the ATP binding site. A Phosphotyrosine; by autocatalysis modification is found at Tyr-76. Residue Ser-88 is modified to Phosphoserine; by autocatalysis. Phosphothreonine; by autocatalysis is present on Thr-122.

This sequence belongs to the protein kinase superfamily. CMGC Ser/Thr protein kinase family. MNB/DYRK subfamily. In terms of assembly, interacts with RAD54L2/ARIP4. Interacts with CRY2. Interacts with RANBP9. Interacts with WDR68. Interacts with SIRT1. Can also autophosphorylate on serine and threonine residues (in vitro). Autophosphorylated on numerous tyrosine residues.

The protein localises to the nucleus. The enzyme catalyses L-tyrosyl-[protein] + ATP = O-phospho-L-tyrosyl-[protein] + ADP + H(+). The catalysed reaction is L-seryl-[protein] + ATP = O-phospho-L-seryl-[protein] + ADP + H(+). It carries out the reaction L-threonyl-[protein] + ATP = O-phospho-L-threonyl-[protein] + ADP + H(+). It catalyses the reaction [DNA-directed RNA polymerase] + ATP = phospho-[DNA-directed RNA polymerase] + ADP + H(+). With respect to regulation, inhibited by RANBP9. Functionally, dual-specificity kinase which possesses both serine/threonine and tyrosine kinase activities. Exhibits a substrate preference for proline at position P+1 and arginine at position P-3. Plays an important role in double-strand breaks (DSBs) repair following DNA damage. Mechanistically, phosphorylates RNF169 and increases its ability to block accumulation of TP53BP1 at the DSB sites thereby promoting homologous recombination repair (HRR). Also acts as a positive regulator of transcription by acting as a CTD kinase that mediates phosphorylation of the CTD (C-terminal domain) of the large subunit of RNA polymerase II (RNAP II) POLR2A. May play a role in a signaling pathway regulating nuclear functions of cell proliferation. Modulates alternative splicing by phosphorylating the splice factor SRSF6. Has pro-survival function and negatively regulates the apoptotic process. Promotes cell survival upon genotoxic stress through phosphorylation of SIRT1. This in turn inhibits p53/TP53 activity and apoptosis. Phosphorylates SEPTIN4, SEPTIN5 and SF3B1 at 'Thr-434'. The sequence is that of Dual specificity tyrosine-phosphorylation-regulated kinase 1A from Oryctolagus cuniculus (Rabbit).